We begin with the raw amino-acid sequence, 421 residues long: Testin (421 aa).

Residues 92–199 enclose the PET domain; it reads MILTNPVAAK…GDVKLPREMD (108 aa). The interval 134–164 is disordered; sequence KQPVAGSEGAQYRKKQLAKQLPAHDQDPSKC. Residues 155-164 show a composition bias toward basic and acidic residues; the sequence is PAHDQDPSKC. LIM zinc-binding domains lie at 234-297, 299-359, and 362-421; these read YSCY…CDSE, PRCA…NHAV, and QGCH…KMMS.

Belongs to the prickle / espinas / testin family. In terms of assembly, interacts via LIM domain 1 with ZYX. Interacts (via LIM domain 3) with ENAH and VASP. Interacts with ALKBH4, talin, actin, alpha-actinin, GRIP1 and PXN. Interacts (via LIM domain 2) with ACTL7A (via N-terminus). Heterodimer with ACTL7A; the heterodimer interacts with ENAH to form a heterotrimer.

Its subcellular location is the cytoplasm. It localises to the cell junction. The protein localises to the focal adhesion. Functionally, scaffold protein that may play a role in cell adhesion, cell spreading and in the reorganization of the actin cytoskeleton. Plays a role in the regulation of cell proliferation. May act as a tumor suppressor. This Rhinolophus ferrumequinum (Greater horseshoe bat) protein is Testin (TES).